We begin with the raw amino-acid sequence, 416 residues long: Phosphoglycerate kinase 2 (416 aa).

Substrate contacts are provided by residues 28-30 (DMN), Arg-44, 65-68 (HQSR), Arg-122, and Arg-162. ATP-binding positions include Glu-337 and 362–365 (GGHI).

The protein belongs to the phosphoglycerate kinase family. As to quaternary structure, monomer.

It localises to the cytoplasm. It catalyses the reaction (2R)-3-phosphoglycerate + ATP = (2R)-3-phospho-glyceroyl phosphate + ADP. It participates in carbohydrate degradation; glycolysis; pyruvate from D-glyceraldehyde 3-phosphate: step 2/5. This is Phosphoglycerate kinase 2 from Methanosarcina acetivorans (strain ATCC 35395 / DSM 2834 / JCM 12185 / C2A).